The primary structure comprises 149 residues: UPF0102 protein Bpro_0391 (149 aa).

The segment at M1–D30 is disordered.

Belongs to the UPF0102 family.

The protein is UPF0102 protein Bpro_0391 of Polaromonas sp. (strain JS666 / ATCC BAA-500).